We begin with the raw amino-acid sequence, 139 residues long: Protein FAM237B (139 aa).

An N-terminal signal peptide occupies residues 1 to 24; the sequence is MCFATRRWFYLHLGCMMLINLVNA. Position 112 is a methionine amide (M112). The propeptide at 113–139 is removed in the mature form; it reads GRRQVMPPKYNFPQKITGGNLNVYLRE.

Post-translationally, the active form requires C-terminal amidation and disulfide bond formation.

The protein localises to the secreted. Functionally, may be capable of activating GPR83 via the GNAQ signaling pathway. This is Protein FAM237B from Homo sapiens (Human).